Reading from the N-terminus, the 313-residue chain is uncharacterized protein (313 aa).

The N-acetyltransferase domain occupies 6-152 (YDILENPEPN…YHASMEKMTG (147 aa)).

To the C-terminal of C.elegans F21C10.9. This is an uncharacterized protein from Caenorhabditis elegans.